Consider the following 460-residue polypeptide: Ufm1-specific protease 2 (460 aa).

Active-site residues include cysteine 293, aspartate 417, and histidine 419.

Belongs to the peptidase C78 family.

It localises to the endoplasmic reticulum. The protein resides in the cytoplasm. The protein localises to the nucleus. In terms of biological role, thiol-dependent isopeptidase that specifically cleaves UFM1, a ubiquitin-like modifier protein, from conjugated proteins. While it is also able to mediate the processing of UFM1 precursors, a prerequisite for conjugation reactions, UFSP2 mainly acts as a protein deUFMylase that mediates deconjugation of UFM1 from target proteins. The protein is Ufm1-specific protease 2 of Gallus gallus (Chicken).